We begin with the raw amino-acid sequence, 188 residues long: Killer cell lectin-like receptor subfamily G member 1 (188 aa).

At 1-33 the chain is on the cytoplasmic side; it reads MADSSIYSTLELPEAPQVQDESRWKLKAVLHRP. The ITIM motif signature appears at 5–10; the sequence is SIYSTL. A helical; Signal-anchor for type II membrane protein membrane pass occupies residues 34–56; that stretch reads HLSRFAMVALGLLTVILMSLLMY. Over 57-188 the chain is Extracellular; sequence QRILCCGSKD…LQWICKKVLY (132 aa). An intrachain disulfide couples C75 to C86. 2 N-linked (GlcNAc...) asparagine glycosylation sites follow: N82 and N97. Residues 82 to 184 form the C-type lectin domain; that stretch reads NGSHCYYFSM…CEVALQWICK (103 aa). Cystine bridges form between C103–C183 and C162–C175.

In terms of assembly, forms a monomer and homodimer; disulfide-linked. Interacts (via ITIM motif) with PTPN11 and INPP5D. Post-translationally, phosphorylated in response to monoclonal antibody G63 binding and antigenic stimulation. Expressed specifically on natural killer (NK) cells and activated CD8 T-cells. Not detected in spleen, thymus, lymph node, testis, brain or kidney. Not detected on mast cell lines, bone marrow-derived mast cells, or peritoneal mast cells.

It is found in the cell membrane. Functionally, plays an inhibitory role on natural killer (NK) cells and T-cell functions upon binding to their non-MHC ligands. May mediate missing self recognition by binding to a highly conserved site on classical cadherins, enabling it to monitor expression of E-cadherin/CDH1, N-cadherin/CDH2 and R-cadherin/CDH4 on target cells. The chain is Killer cell lectin-like receptor subfamily G member 1 (Klrg1) from Mus musculus (Mouse).